Here is a 427-residue protein sequence, read N- to C-terminus: Enolase (427 aa).

Residue Gln-163 participates in (2R)-2-phosphoglycerate binding. Glu-205 (proton donor) is an active-site residue. Mg(2+)-binding residues include Asp-242, Glu-285, and Asp-312. 4 residues coordinate (2R)-2-phosphoglycerate: Lys-337, Arg-366, Ser-367, and Lys-388. The Proton acceptor role is filled by Lys-337.

The protein belongs to the enolase family. The cofactor is Mg(2+).

The protein resides in the cytoplasm. It is found in the secreted. It localises to the cell surface. The catalysed reaction is (2R)-2-phosphoglycerate = phosphoenolpyruvate + H2O. Its pathway is carbohydrate degradation; glycolysis; pyruvate from D-glyceraldehyde 3-phosphate: step 4/5. Its function is as follows. Catalyzes the reversible conversion of 2-phosphoglycerate (2-PG) into phosphoenolpyruvate (PEP). It is essential for the degradation of carbohydrates via glycolysis. The chain is Enolase from Thiobacillus denitrificans (strain ATCC 25259 / T1).